The following is a 317-amino-acid chain: tRNA uridine(34) hydroxylase (317 aa).

Residues 123 to 217 (EDDDTIVIDA…YGKDPETKGE (95 aa)) enclose the Rhodanese domain. Cysteine 177 functions as the Cysteine persulfide intermediate in the catalytic mechanism.

This sequence belongs to the TrhO family.

The catalysed reaction is uridine(34) in tRNA + AH2 + O2 = 5-hydroxyuridine(34) in tRNA + A + H2O. Its function is as follows. Catalyzes oxygen-dependent 5-hydroxyuridine (ho5U) modification at position 34 in tRNAs. The protein is tRNA uridine(34) hydroxylase of Staphylococcus carnosus (strain TM300).